A 419-amino-acid chain; its full sequence is Methyltransferase/ribosomally synthesized type I borosin cyclic peptide precursor gjuMa (419 aa).

The methyltransferase domain stretch occupies residues 1-255; it reads MATPIATTTN…AISTLYVPPR (255 aa). Active-site residues include arginine 79, tyrosine 83, and tyrosine 105. S-adenosyl-L-methionine-binding residues include tyrosine 105, histidine 107, valine 110, alanine 137, glutamine 179, glycine 217, serine 248, and threonine 249. The interval 256–381 is clasp domain; sequence DISPVDPTMA…GAVYALMSRP (126 aa). The tract at residues 382 to 404 is precursor leader; the sequence is TGDIAREKELTNDEIANNHGAPY. An N-methylserine modification is found at serine 408. Alanine 409 is modified (N-methylalanine). N-methylvaline is present on valine 410. Isoleucine 411 and isoleucine 412 each carry N-methylisoleucine. An N-methylalanine mark is found at alanine 413 and alanine 414. 2 positions are modified to N-methylisoleucine: isoleucine 415 and isoleucine 416.

It in the N-terminal section; belongs to the precorrin methyltransferase family. In terms of assembly, homodimer. In terms of processing, gjuMA automethylates at Ser-408, Ala-409, Val-410, Ile-411, Ile-412, Ala-413, Ala-414, Ile-415 and Ile-416 before being processed by ae prolyloligopeptidase which likely forms a peptidyl ester upon removal of the follower propeptide, which then undergoes macrocyclization with the N-terminus of the modified core peptide. Peptide backbone alpha-N-methylations change the physicochemical properties of amide bonds to provide structural constraints and other favorable characteristics including biological membrane permeability to peptides.

Its pathway is secondary metabolite biosynthesis. Functionally, fusion protein of the methyltransferase gjuM and the type I borosin core peptide; part of the gene cluster that mediates the biosynthesis of a type I borosin, a highly methylated cyclic peptide with potent biological activities. Type I borosins derive from the C-terminus of the fusion protein, and it is the same protein that methylates its own C-terminus using S-adenosyl methionine (SAM). The C-terminus is subsequently cleaved off and macrocyclized by a prolyloligopeptidase to give the final product. The chain is Methyltransferase/ribosomally synthesized type I borosin cyclic peptide precursor gjuMa from Gymnopilus junonius (Spectacular rustgill mushroom).